The sequence spans 172 residues: Zinc finger protein 580 (172 aa).

A disordered region spans residues 1–92; that stretch reads MLLLPPRPPH…PGEPGPRKGY (92 aa). Pro residues predominate over residues 19–30; it reads MDPPPPKTPPFP. A Glycyl lysine isopeptide (Lys-Gly) (interchain with G-Cter in SUMO2) cross-link involves residue Lys31. The C2H2-type 1 zinc-finger motif lies at 92–114; the sequence is YSCPECARVFASPLRLQSHRVSH. Lys118 participates in a covalent cross-link: Glycyl lysine isopeptide (Lys-Gly) (interchain with G-Cter in SUMO2). C2H2-type zinc fingers lie at residues 120–142 and 150–172; these read FTCG…RATH and HTCP…VRLH.

As to quaternary structure, interacts with SMAD2.

It is found in the nucleus. Its function is as follows. Involved in the regulation of endothelial cell proliferation and migration. Mediates H(2)O(2)-induced leukocyte chemotaxis by elevating interleukin-8 production and may play a role in inflammation. May be involved in transcriptional regulation. This chain is Zinc finger protein 580 (Znf580), found in Mus musculus (Mouse).